A 228-amino-acid chain; its full sequence is Probable septum site-determining protein MinC (228 aa).

Belongs to the MinC family. In terms of assembly, interacts with MinD and FtsZ.

In terms of biological role, cell division inhibitor that blocks the formation of polar Z ring septums. Rapidly oscillates between the poles of the cell to destabilize FtsZ filaments that have formed before they mature into polar Z rings. Prevents FtsZ polymerization. The polypeptide is Probable septum site-determining protein MinC (Bacillus cytotoxicus (strain DSM 22905 / CIP 110041 / 391-98 / NVH 391-98)).